The chain runs to 882 residues: Translation initiation factor IF-2 (882 aa).

The tract at residues 57-211 (YIPANKTKDK…KDKSKPKVAT (155 aa)) is disordered. Over residues 104-115 (TTSEKQKDKGEQ) the composition is skewed to basic and acidic residues. The segment covering 199-211 (RHKKDKSKPKVAT) has biased composition (basic residues). Residues 381 to 550 (ERPPVVTIMG…LIQAEVLELK (170 aa)) form the tr-type G domain. The tract at residues 390–397 (GHVDHGKT) is G1. Residue 390–397 (GHVDHGKT) participates in GTP binding. The G2 stretch occupies residues 415–419 (GITQH). The tract at residues 436-439 (DTPG) is G3. GTP contacts are provided by residues 436–440 (DTPGH) and 490–493 (NKMD). The G4 stretch occupies residues 490-493 (NKMD). The segment at 526–528 (SAK) is G5.

It belongs to the TRAFAC class translation factor GTPase superfamily. Classic translation factor GTPase family. IF-2 subfamily.

The protein localises to the cytoplasm. One of the essential components for the initiation of protein synthesis. Protects formylmethionyl-tRNA from spontaneous hydrolysis and promotes its binding to the 30S ribosomal subunits. Also involved in the hydrolysis of GTP during the formation of the 70S ribosomal complex. The polypeptide is Translation initiation factor IF-2 (Helicobacter hepaticus (strain ATCC 51449 / 3B1)).